A 550-amino-acid polypeptide reads, in one-letter code: Cochlin (550 aa).

The N-terminal stretch at 1-24 (MSAAWIPALGLGVCLLLLPGPAGS) is a signal peptide. The region spanning 28–121 (APIAITCFTR…QMLSRWSASF (94 aa)) is the LCCL domain. 2 disulfides stabilise this stretch: C34–C50 and C54–C74. The N-linked (GlcNAc...) asparagine glycan is linked to N100. Residues 128-139 (SSTQEATGQAVS) show a composition bias toward polar residues. The segment at 128 to 159 (SSTQEATGQAVSTAHPPTGKRLKKTPEKKTGN) is disordered. VWFA domains are found at residues 165 to 346 (DIAF…VKPL) and 367 to 537 (NIAF…VSDV). N221 carries an N-linked (GlcNAc...) asparagine glycan.

In terms of assembly, monomer. May form homodimer. Interacts with type II collagen. Interacts with SLC44A2. Interacts with ANXA2. N-glycosylated. Post-translationally, a 50 kDa form is created by proteolytic cleavage. As to expression, expressed in inner ear structures; the cochlea and the vestibule.

The protein resides in the secreted. It is found in the extracellular space. It localises to the extracellular matrix. Functionally, plays a role in the control of cell shape and motility in the trabecular meshwork. In Homo sapiens (Human), this protein is Cochlin (COCH).